Reading from the N-terminus, the 292-residue chain is 1D-myo-inositol 2-acetamido-2-deoxy-alpha-D-glucopyranoside deacetylase (292 aa).

H12, D15, and H147 together coordinate Zn(2+).

It belongs to the MshB deacetylase family. Zn(2+) is required as a cofactor.

It catalyses the reaction 1D-myo-inositol 2-acetamido-2-deoxy-alpha-D-glucopyranoside + H2O = 1D-myo-inositol 2-amino-2-deoxy-alpha-D-glucopyranoside + acetate. In terms of biological role, catalyzes the deacetylation of 1D-myo-inositol 2-acetamido-2-deoxy-alpha-D-glucopyranoside (GlcNAc-Ins) in the mycothiol biosynthesis pathway. The sequence is that of 1D-myo-inositol 2-acetamido-2-deoxy-alpha-D-glucopyranoside deacetylase from Rhodococcus opacus (strain B4).